A 265-amino-acid polypeptide reads, in one-letter code: Type III pantothenate kinase (265 aa).

6 to 13 (DVGNTHTV) is an ATP binding site. 112–115 (GADR) is a substrate binding site. Asp-114 serves as the catalytic Proton acceptor. Asp-134 is a K(+) binding site. Thr-137 provides a ligand contact to ATP. Thr-189 is a substrate binding site.

It belongs to the type III pantothenate kinase family. As to quaternary structure, homodimer. NH4(+) is required as a cofactor. Requires K(+) as cofactor.

Its subcellular location is the cytoplasm. The catalysed reaction is (R)-pantothenate + ATP = (R)-4'-phosphopantothenate + ADP + H(+). The protein operates within cofactor biosynthesis; coenzyme A biosynthesis; CoA from (R)-pantothenate: step 1/5. Its function is as follows. Catalyzes the phosphorylation of pantothenate (Pan), the first step in CoA biosynthesis. In Streptomyces avermitilis (strain ATCC 31267 / DSM 46492 / JCM 5070 / NBRC 14893 / NCIMB 12804 / NRRL 8165 / MA-4680), this protein is Type III pantothenate kinase.